The following is a 405-amino-acid chain: Peroxisomal membrane protein PEX13 (405 aa).

Residues methionine 1–proline 11 show a composition bias toward pro residues. The disordered stretch occupies residues methionine 1–asparagine 71. Over methionine 1–glutamate 136 the chain is Peroxisomal matrix. Residues proline 61–asparagine 71 are compositionally biased toward polar residues. Residues serine 137–tyrosine 157 form a helical membrane-spanning segment. The targeting to peroxisomes stretch occupies residues methionine 147 to serine 235. Residues asparagine 158 to histidine 176 lie on the Cytoplasmic side of the membrane. The chain crosses the membrane as a helical span at residues phenylalanine 177 to tyrosine 194. The tract at residues phenylalanine 177–glutamine 198 is interaction with PEX19. Residues arginine 195 to serine 235 are Peroxisomal matrix-facing. A helical transmembrane segment spans residues tryptophan 236 to leucine 256. Residues serine 257–leucine 405 lie on the Cytoplasmic side of the membrane. The SH3 domain maps to aspartate 274–lysine 338. Serine 356 bears the Phosphoserine mark.

This sequence belongs to the peroxin-13 family. Interacts (via SH3 domain) with PEX14 (via SH3-binding motif); forming the PEX13-PEX14 docking complex. Interacts with PEX19.

Its subcellular location is the peroxisome membrane. In terms of biological role, component of the PEX13-PEX14 docking complex, a translocon channel that specifically mediates the import of peroxisomal cargo proteins bound to PEX5 receptor. The PEX13-PEX14 docking complex forms a large import pore which can be opened to a diameter of about 9 nm. Mechanistically, PEX5 receptor along with cargo proteins associates with the PEX14 subunit of the PEX13-PEX14 docking complex in the cytosol, leading to the insertion of the receptor into the organelle membrane with the concomitant translocation of the cargo into the peroxisome matrix. Involved in the import of PTS1- and PTS2-type containing proteins. This is Peroxisomal membrane protein PEX13 from Mus musculus (Mouse).